Here is a 378-residue protein sequence, read N- to C-terminus: MLYFLLYEQLHRYISPFRVFSYTTVRTAFASLTALFLCIALGPWLINKLREFQIGQYIREEGPKSHQKKAGTPTMGGVLIVISIVIPTLLWADLRYPYVWIALAGLLGYGWIGFLDDYAKVTKQRNLGLSGKRKLVYQFIMGFAFAASLLVMRAYGDFSTTMNIPFLKQFKPSLLMTSMMANPWTYVIGVAPFCIFVALVVVFYSNAVNLTDGLDGLAIGLMVIAAGALTVLAYAGGHAQLAQYLQLARNPRTSELTIFCGSMTGASLGFLWYNAHPAEIFMGDVGSLGLGGAMAVVAVLIKQEILLLFIGGIFVLEAFSVILQVGSYKLRHGKRIFKMAPLHHHFEALGWTESKIIARFWIAGLVLALFALTTLKLR.

Helical transmembrane passes span 27–47 (TAFA…WLIN), 74–94 (TMGG…WADL), 96–116 (YPYV…GFLD), 135–155 (LVYQ…MRAY), 184–204 (WTYV…VVFY), 216–236 (GLAI…AYAG), 256–276 (LTIF…YNAH), 280–300 (IFMG…VAVL), 305–325 (ILLL…ILQV), and 355–375 (KIIA…LTTL).

Belongs to the glycosyltransferase 4 family. MraY subfamily. Mg(2+) serves as cofactor.

The protein resides in the cell inner membrane. It carries out the reaction UDP-N-acetyl-alpha-D-muramoyl-L-alanyl-gamma-D-glutamyl-meso-2,6-diaminopimeloyl-D-alanyl-D-alanine + di-trans,octa-cis-undecaprenyl phosphate = di-trans,octa-cis-undecaprenyl diphospho-N-acetyl-alpha-D-muramoyl-L-alanyl-D-glutamyl-meso-2,6-diaminopimeloyl-D-alanyl-D-alanine + UMP. It participates in cell wall biogenesis; peptidoglycan biosynthesis. Catalyzes the initial step of the lipid cycle reactions in the biosynthesis of the cell wall peptidoglycan: transfers peptidoglycan precursor phospho-MurNAc-pentapeptide from UDP-MurNAc-pentapeptide onto the lipid carrier undecaprenyl phosphate, yielding undecaprenyl-pyrophosphoryl-MurNAc-pentapeptide, known as lipid I. This is Phospho-N-acetylmuramoyl-pentapeptide-transferase from Solibacter usitatus (strain Ellin6076).